The primary structure comprises 963 residues: Importin-13 (963 aa).

HEAT repeat units lie at residues 24–54, 56–88, 95–135, 142–179, 194–231, 236–268, 276–325, 330–372, 375–438, 440–476, 487–522, 524–558, 562–600, 603–648, 676–716, 720–754, 761–803, 815–845, 860–893, and 897–931; these read ENVEKALHQLYYDPNIDNKNLAQKWLMQAQV, PQAWHFSWQLLQPDKVPEIQYFGASALHIKISR, TDQY…LSMM, AVADMVRLFQAEDSPVDSQGRCLALLELLTVLPEEFQT, LAVECGTVFPLLEQLLQQPSSPSCVRQKVLKCFSSWVQ, LQDCEALIQAAFAALQDSELFDSSVEAIVNAIS, VNTL…ALLD, WQSF…DDIL, EAEK…YEML, AELLSNLYDKLGRLLTSSEEPYSWQHTEALLYGFQSI, VVPGLIGLIPRISISNVQLADTVMFTIGALSEWLAD, PVMINSVLPLVLHALGNPELSVSSVSTLKKICREC, LPPYAANIVAVSQDVLMKQIHKTSQCMWLMQALGFLLSA, VEEI…SNLF, PVVV…VKTL, FAPMVPQLCEMLGRMYSTVPQASALDLTRQLVHIF, FPPI…ALKR, VKAVFQCAVLALKFPEAPTVKASCGFFTELL, EDGRMLLIAVLEAIGGQASRSLMDCFADILFALN, and FSLLSMWIKEALQPPGFPSARLSPEQKDTFSQQIL. The Importin N-terminal domain occupies 45–111; sequence AQKWLMQAQV…KAQLFTQITR (67 aa).

This sequence belongs to the importin beta family. As to quaternary structure, interacts with UBC9, RAN, RBM8A, eIF-1A and PAX6.

The protein localises to the cytoplasm. It localises to the nucleus. Its function is as follows. Functions in nuclear protein import as nuclear transport receptor. Serves as receptor for nuclear localization signals (NLS) in cargo substrates. Is thought to mediate docking of the importin/substrate complex to the nuclear pore complex (NPC) through binding to nucleoporin and the complex is subsequently translocated through the pore by an energy requiring, Ran-dependent mechanism. At the nucleoplasmic side of the NPC, Ran binds to the importin, the importin/substrate complex dissociates and importin is re-exported from the nucleus to the cytoplasm where GTP hydrolysis releases Ran. The directionality of nuclear import is thought to be conferred by an asymmetric distribution of the GTP- and GDP-bound forms of Ran between the cytoplasm and nucleus. Mediates the nuclear import of UBC9, the RBM8A/MAGOH complex, PAX6 and probably other members of the paired homeobox family. Also mediates nuclear export of eIF-1A, and the cytoplasmic release of eIF-1A is triggered by the loading of import substrates onto IPO13. The sequence is that of Importin-13 (Ipo13) from Mus musculus (Mouse).